We begin with the raw amino-acid sequence, 507 residues long: Maturase K (507 aa).

This sequence belongs to the intron maturase 2 family. MatK subfamily.

It is found in the plastid. The protein localises to the chloroplast. Usually encoded in the trnK tRNA gene intron. Probably assists in splicing its own and other chloroplast group II introns. The protein is Maturase K of Nymphaea alba (White water-lily).